Here is a 271-residue protein sequence, read N- to C-terminus: 4-hydroxy-tetrahydrodipicolinate reductase (271 aa).

NAD(+) contacts are provided by residues 10–15, Glu36, 100–102, and 124–127; these read GAGGRM, GTT, and SGNM. Catalysis depends on His157, which acts as the Proton donor/acceptor. His158 is a (S)-2,3,4,5-tetrahydrodipicolinate binding site. Catalysis depends on Lys161, which acts as the Proton donor. 167 to 168 lines the (S)-2,3,4,5-tetrahydrodipicolinate pocket; that stretch reads GT.

Belongs to the DapB family.

The protein localises to the cytoplasm. The catalysed reaction is (S)-2,3,4,5-tetrahydrodipicolinate + NAD(+) + H2O = (2S,4S)-4-hydroxy-2,3,4,5-tetrahydrodipicolinate + NADH + H(+). The enzyme catalyses (S)-2,3,4,5-tetrahydrodipicolinate + NADP(+) + H2O = (2S,4S)-4-hydroxy-2,3,4,5-tetrahydrodipicolinate + NADPH + H(+). The protein operates within amino-acid biosynthesis; L-lysine biosynthesis via DAP pathway; (S)-tetrahydrodipicolinate from L-aspartate: step 4/4. Its function is as follows. Catalyzes the conversion of 4-hydroxy-tetrahydrodipicolinate (HTPA) to tetrahydrodipicolinate. The polypeptide is 4-hydroxy-tetrahydrodipicolinate reductase (Rhodopseudomonas palustris (strain BisB5)).